Reading from the N-terminus, the 877-residue chain is MCSFLRVPSPKGLEPSKGLGAPLQPGTAYPSEMSALGPGMTVSGRKSPLSMEVGLAPEGKDDLEERRVFMGTTSPTELGLRVGLRKDFPCSKTYEERMASPEIRSPSSKGLELRLKRQNISRTVMDGSNLGVHRVSASQETKPPLSALPGRVGLEKERFLAGYCPGRVTQPPLGQGCESPQASGGRRCPVTGDPEGFGASVSKLPALGMECRGELGGESACVVMKPRAETEPPVEVDMGLTRLEEPAEMESPEPQMGLVMEPPAWQLAQQPEEQREAENTEPGVEPPDRIRPIYSGKFFDRMPCWPSAGKVLPIGYRAATCLTERFPRLMTPPEAKKFFNFRYPPAGAERVFYGRANDPQIAPSLTHGIRSKISIPAKVLINPQPITTFQQKMKDKKESVYFSNQRAPLGKSHDQTPGLPKGLDILNTTFGTAIVRETSARDMVNPPKPYKEVFEEAQAGHDLYVVSHNDYFVGEAKNRKYDPSSFHRFNLYGIPTPHFNDGRNMAKTLHWLHELQMKRGAKIVSKRVDDFKEKFQHRLGRVLDPIAETMNVPPDYTFGAFLRPEDYGVGDLIHRRLPGEYLRGKDRQRGLVAAVRHHLKKVNYQNFDTLLAAFRHYDKKGDGVIDRAELQEACDQACLHLDEKLLDQLFEYCDVDKDGLINYLEFANFLTWKDKTPLKEYEERVLIKGRKADCANPAEANVEESEPALLLKPEDIVLKEPGSSEKTLRTLLRPSDKVSNHYKTTSSEISAVVGAVPSTCYPTYGVPTIRSDIPAPLIRRVSDRTSYGEEGNAYSLLHPTIFAQKGVFERDFFKTRSKQEISEILCNIGVKLSEDEFENVWNLASKKHHRGEVCVENIRSVLDELQHADGAKCKAAT.

Disordered regions lie at residues 1–47 (MCSF…GRKS) and 268–290 (AQQPEEQREAENTEPGVEPPDRI). EF-hand domains follow at residues 605-640 (QNFDTLLAAFRHYDKKGDGVIDRAELQEACDQACLH) and 641-676 (LDEKLLDQLFEYCDVDKDGLINYLEFANFLTWKDKT). The Ca(2+) site is built by Asp-618, Asp-622, Glu-629, Asp-654, Asp-656, Asp-658, and Glu-665.

In terms of assembly, microtubule inner protein component of sperm flagellar doublet microtubules. Interacts with STIM1 and ORAI1; the interactions take place upon Ca(2+)-store depletion and dissociate through a Ca(2+)-dependent mechanism. Interaction with STIM1 inhibits STIM1 interaction with SARAF. Expressed in trachea multiciliated cells.

It is found in the cytoplasm. The protein localises to the cytoskeleton. The protein resides in the cilium axoneme. Its subcellular location is the flagellum axoneme. Microtubule inner protein (MIP) part of the dynein-decorated doublet microtubules (DMTs) in cilia axoneme, which is required for motile cilia beating. Cytosolic sensor for calcium, modulates the interaction of STIM1 and ORAI1 upon store depletion and the activation of store-operated Ca(2+) entry (SOCE) and NFAT translocation from cytosol to nucleus. The polypeptide is EF-hand domain-containing family member B (Bos taurus (Bovine)).